The primary structure comprises 718 residues: Origin of replication complex subunit 3 (718 aa).

The span at 26–43 (GAAASSSSSSAPSLPSSG) shows a compositional bias: low complexity. Residues 26-75 (GAAASSSSSSAPSLPSSGRARRRIDVSGLASPNPKPGKRSRDDDAAEDDD) are disordered. The short motif at 659 to 666 (IKRKPHTS) is the Nuclear localization signal element.

Belongs to the ORC3 family. In terms of assembly, component of the origin recognition complex (ORC) composed of at least ORC1, ORC2, ORC3, ORC4, ORC5 and ORC6. ORC is regulated in a cell-cycle and development dependent manner. It is sequentially assembled at the exit from anaphase of mitosis and disassembled as cells enter S phase. Expressed at low levels in the shoot apical meristem (SAM), leaves, ears and roots (including root tips).

It localises to the nucleus. In terms of biological role, component of the origin recognition complex (ORC) that binds origins of replication. DNA-binding is ATP-dependent. The specific DNA sequences that define origins of replication have not been identified yet. The polypeptide is Origin of replication complex subunit 3 (Oryza sativa subsp. japonica (Rice)).